We begin with the raw amino-acid sequence, 469 residues long: MGVCTEERPVMHWQQSARFLGPGAREKSPTPPVAHQGSNQCGSAAGANNNHPLFRACSSSSCPDICDHSTKPFGNAYGTESFRSYETADRATFEDSAAKFSISRSRTDCTEVSDETTSGISFKTEPFGPPSSPESTSDSKITRNLDDCSGCGRQIQDRFYLSAVEKRWHASCLQCYACRQPLERESSCYSRDGNIYCKNDYYSFFGTRRCSRCLASISSNELVMRARNLVFHVNCFCCTVCHTPLTKGDQYGIIDALIYCRTHYSIAREGDTASSSMSATYPYSAQFGSPHNDSSSPHSDPSRSIVPTGIFVPASHVINGLPQPARQKGRPRKRKPKDIEAFTANIDLNTEYVDFGRGSHLSSSSRTKRMRTSFKHHQLRTMKSYFAINHNPDAKDLKQLSQKTGLPKRVLQVWFQNARAKWRRMMMKQDGSGLLEKGEGALDLDSISVHSPTSFILGGPNSTPPLNLD.

2 disordered regions span residues 21-44 (GPGAREKSPTPPVAHQGSNQCGSA) and 111-141 (EVSDETTSGISFKTEPFGPPSSPESTSDSKI). LIM zinc-binding domains follow at residues 148-200 (CSGC…CKND) and 210-263 (CSRC…CRTH). The homeobox DNA-binding region spans 367–426 (TKRMRTSFKHHQLRTMKSYFAINHNPDAKDLKQLSQKTGLPKRVLQVWFQNARAKWRRMM).

In terms of tissue distribution, expressed in PNS and CNS.

It is found in the nucleus. In terms of biological role, required for the normal development of the wing and halter imaginal disks. This chain is Protein apterous (ap), found in Drosophila melanogaster (Fruit fly).